A 282-amino-acid chain; its full sequence is Globin-related protein glb-13 (282 aa).

The interval 1–46 (MGQENSKCPHQSLAEKRYKVERPKTKKVSSGSATERCLSTQSDEKN) is disordered. The span at 13-23 (LAEKRYKVERP) shows a compositional bias: basic and acidic residues. Polar residues predominate over residues 28-41 (VSSGSATERCLSTQ). The 150-residue stretch at 100–249 (FLTRRERILL…IISFMRRGFD (150 aa)) folds into the Globin domain. Residues histidine 162 and histidine 194 each coordinate heme b.

This sequence belongs to the globin family.

In terms of biological role, involved in oxidative stress resistance. This chain is Globin-related protein glb-13, found in Caenorhabditis elegans.